The primary structure comprises 424 residues: Tubulin gamma chain, nucleomorph (424 aa).

137–143 lines the GTP pocket; sequence NGGTGAG.

The protein belongs to the tubulin family.

Its function is as follows. Tubulin is the major constituent of microtubules. The gamma chain is found at microtubule organizing centers (MTOC) such as the spindle poles or the centrosome, suggesting that it is involved in the minus-end nucleation of microtubule assembly. This chain is Tubulin gamma chain, nucleomorph (tubG), found in Guillardia theta (Cryptophyte).